The sequence spans 227 residues: Ribonuclease 3 (227 aa).

The 123-residue stretch at 6-128 (ASDYQQRIGY…VIAAIYLDAD (123 aa)) folds into the RNase III domain. E41 is a binding site for Mg(2+). Residue D45 is part of the active site. Positions 114 and 117 each coordinate Mg(2+). The active site involves E117. Residues 155-225 (DPKTRLQEWL…ASHAIDQLDS (71 aa)) form the DRBM domain. Basic and acidic residues predominate over residues 203-212 (GEGSSRRLAE). The interval 203 to 227 (GEGSSRRLAEQDAASHAIDQLDSNK) is disordered.

The protein belongs to the ribonuclease III family. Homodimer. The cofactor is Mg(2+).

It localises to the cytoplasm. It catalyses the reaction Endonucleolytic cleavage to 5'-phosphomonoester.. Its function is as follows. Digests double-stranded RNA. Involved in the processing of primary rRNA transcript to yield the immediate precursors to the large and small rRNAs (23S and 16S). Processes some mRNAs, and tRNAs when they are encoded in the rRNA operon. Processes pre-crRNA and tracrRNA of type II CRISPR loci if present in the organism. The polypeptide is Ribonuclease 3 (Xylella fastidiosa (strain M23)).